Consider the following 137-residue polypeptide: NTF2-related export protein (137 aa).

Residues 19-135 (ESKKFMDVYY…YKVKSDRFRY (117 aa)) enclose the NTF2 domain.

In terms of assembly, preferentially binds Ran-GTP.

The protein resides in the nucleus. Stimulator of protein export for NES-containing proteins. Also plays a role in the nuclear export of U1 snRNA, tRNA, and mRNA. This chain is NTF2-related export protein (nxt-1), found in Caenorhabditis elegans.